Here is a 360-residue protein sequence, read N- to C-terminus: Dual-specificity RNA methyltransferase RlmN (360 aa).

The active-site Proton acceptor is glutamate 91. The Radical SAM core domain occupies 110 to 343; sequence RSEKYTVCIS…CTIRESKGLD (234 aa). Cysteine 117 and cysteine 348 are disulfide-bonded. [4Fe-4S] cluster-binding residues include cysteine 124, cysteine 128, and cysteine 131. S-adenosyl-L-methionine is bound by residues 174-175, serine 206, 229-231, and asparagine 305; these read GE and SLH. The S-methylcysteine intermediate role is filled by cysteine 348.

The protein belongs to the radical SAM superfamily. RlmN family. It depends on [4Fe-4S] cluster as a cofactor.

It localises to the cytoplasm. The enzyme catalyses adenosine(2503) in 23S rRNA + 2 reduced [2Fe-2S]-[ferredoxin] + 2 S-adenosyl-L-methionine = 2-methyladenosine(2503) in 23S rRNA + 5'-deoxyadenosine + L-methionine + 2 oxidized [2Fe-2S]-[ferredoxin] + S-adenosyl-L-homocysteine. It catalyses the reaction adenosine(37) in tRNA + 2 reduced [2Fe-2S]-[ferredoxin] + 2 S-adenosyl-L-methionine = 2-methyladenosine(37) in tRNA + 5'-deoxyadenosine + L-methionine + 2 oxidized [2Fe-2S]-[ferredoxin] + S-adenosyl-L-homocysteine. Functionally, specifically methylates position 2 of adenine 2503 in 23S rRNA and position 2 of adenine 37 in tRNAs. m2A2503 modification seems to play a crucial role in the proofreading step occurring at the peptidyl transferase center and thus would serve to optimize ribosomal fidelity. This chain is Dual-specificity RNA methyltransferase RlmN, found in Aliarcobacter butzleri (strain RM4018) (Arcobacter butzleri).